We begin with the raw amino-acid sequence, 179 residues long: Interleukin-10 (179 aa).

An N-terminal signal peptide occupies residues 1–19; sequence MPSPALLCCCLVLLAGVGA. 2 cysteine pairs are disulfide-bonded: Cys31-Cys127 and Cys81-Cys133. Residue Asn135 is glycosylated (N-linked (GlcNAc...) asparagine).

The protein belongs to the IL-10 family. Homodimer. Interacts with IL10RA and IL10RB.

The protein resides in the secreted. Functionally, major immune regulatory cytokine that acts on many cells of the immune system where it has profound anti-inflammatory functions, limiting excessive tissue disruption caused by inflammation. Mechanistically, IL10 binds to its heterotetrameric receptor comprising IL10RA and IL10RB leading to JAK1 and STAT2-mediated phosphorylation of STAT3. In turn, STAT3 translocates to the nucleus where it drives expression of anti-inflammatory mediators. Targets antigen-presenting cells (APCs) such as macrophages and monocytes and inhibits their release of pro-inflammatory cytokines including granulocyte-macrophage colony-stimulating factor /GM-CSF, granulocyte colony-stimulating factor/G-CSF, IL-1 alpha, IL-1 beta, IL-6, IL-8 and TNF-alpha. Also interferes with antigen presentation by reducing the expression of MHC-class II and co-stimulatory molecules, thereby inhibiting their ability to induce T cell activation. In addition, controls the inflammatory response of macrophages by reprogramming essential metabolic pathways including mTOR signaling. This is Interleukin-10 (IL10) from Vulpes vulpes (Red fox).